The chain runs to 629 residues: Forkhead box protein O (629 aa).

Threonine 49 carries the post-translational modification Phosphothreonine; by PKB/AKT1. Phosphoserine is present on serine 78. The segment at residues 98-204 (WGNLSYADLI…ETSRYEKRRG (107 aa)) is a DNA-binding region (fork-head). Disordered stretches follow at residues 185–208 (KSVRRRAASMETSRYEKRRGRAKK), 220–274 (GLND…SPIR), 321–368 (QQQF…QTLQ), 394–417 (SPNSVTTTMSPAYPNSEPSSDSLN), and 563–597 (QHLQQQQQQHHQHQQQLLLNNNNNNNNNNSSNSSL). Phosphoserine; by PKB/AKT1 is present on serine 193. Polar residues-rich tracts occupy residues 224-233 (ATPSPSSSVS) and 259-268 (RASSNASSCG). Serine 262 bears the Phosphoserine; by PKB/AKT1 mark. Phosphoserine occurs at positions 265, 266, and 271. The segment covering 332-341 (SQPPPPPYQP) has biased composition (pro residues). A compositionally biased stretch (low complexity) spans 342–356 (PQLQQQQQQQPSYSL). The segment covering 394 to 403 (SPNSVTTTMS) has biased composition (polar residues).

In terms of assembly, interacts with melt.

It localises to the cytoplasm. It is found in the nucleus. Transcription factor involved in the regulation of the insulin signaling pathway. Consistently activates both the downstream target Thor\d4EBP and the feedback control target InR. Involved in negative regulation of the cell cycle, modulating cell growth and proliferation. In response to cellular stresses, such as nutrient deprivation or increased levels of reactive oxygen species, foxo is activated and inhibits growth through the action of target genes such as Thor. Foxo activated in the adult fat body can regulate lifespan in adults; an insulin peptide itself may function as one secondary messenger of insulin-regulated aging. Also regulates Lip4, homolog of human acid lipases, thereby acting as a key modulator of lipid metabolism by insulin signaling and integrates insulin responses to glucose and lipid homeostasis. This Drosophila persimilis (Fruit fly) protein is Forkhead box protein O.